The primary structure comprises 266 residues: Putative peptidyl-prolyl cis-trans isomerase NifM (266 aa).

Positions 124–221 (PEQRLTRHLL…LGWHLLWCEA (98 aa)) constitute a PpiC domain.

The protein belongs to the PpiC/parvulin rotamase family.

It carries out the reaction [protein]-peptidylproline (omega=180) = [protein]-peptidylproline (omega=0). Required for the activation and stabilization of the iron-component (NifH) of nitrogenase. Probable PPIase. This is Putative peptidyl-prolyl cis-trans isomerase NifM (nifM) from Klebsiella oxytoca.